Consider the following 363-residue polypeptide: Peptide chain release factor 1 (363 aa).

Q237 is modified (N5-methylglutamine). A compositionally biased stretch (basic and acidic residues) spans 284–296; that stretch reads EDEKRRSAEESTR. A disordered region spans residues 284–305; sequence EDEKRRSAEESTRRSLVASGDR.

It belongs to the prokaryotic/mitochondrial release factor family. Methylated by PrmC. Methylation increases the termination efficiency of RF1.

The protein resides in the cytoplasm. Peptide chain release factor 1 directs the termination of translation in response to the peptide chain termination codons UAG and UAA. In Shewanella baltica (strain OS185), this protein is Peptide chain release factor 1.